A 101-amino-acid polypeptide reads, in one-letter code: NAD(P)H-quinone oxidoreductase subunit 4L, chloroplastic (101 aa).

3 consecutive transmembrane segments (helical) span residues Met-2–Ile-22, Met-32–Phe-52, and Ile-61–Val-81.

Belongs to the complex I subunit 4L family. In terms of assembly, NDH is composed of at least 16 different subunits, 5 of which are encoded in the nucleus.

It localises to the plastid. The protein localises to the chloroplast thylakoid membrane. The catalysed reaction is a plastoquinone + NADH + (n+1) H(+)(in) = a plastoquinol + NAD(+) + n H(+)(out). It carries out the reaction a plastoquinone + NADPH + (n+1) H(+)(in) = a plastoquinol + NADP(+) + n H(+)(out). In terms of biological role, NDH shuttles electrons from NAD(P)H:plastoquinone, via FMN and iron-sulfur (Fe-S) centers, to quinones in the photosynthetic chain and possibly in a chloroplast respiratory chain. The immediate electron acceptor for the enzyme in this species is believed to be plastoquinone. Couples the redox reaction to proton translocation, and thus conserves the redox energy in a proton gradient. The protein is NAD(P)H-quinone oxidoreductase subunit 4L, chloroplastic of Calycanthus floridus var. glaucus (Eastern sweetshrub).